Here is a 273-residue protein sequence, read N- to C-terminus: Large ribosomal subunit protein uL2 (273 aa).

Residues 224-264 form a disordered region; the sequence is AMNPVDHPHGGGEGRNFGKHPVTPWGIQTKGKKTRKNKRTD. Residues 253–264 are compositionally biased toward basic residues; that stretch reads KGKKTRKNKRTD.

The protein belongs to the universal ribosomal protein uL2 family. As to quaternary structure, part of the 50S ribosomal subunit. Forms a bridge to the 30S subunit in the 70S ribosome.

Functionally, one of the primary rRNA binding proteins. Required for association of the 30S and 50S subunits to form the 70S ribosome, for tRNA binding and peptide bond formation. It has been suggested to have peptidyltransferase activity; this is somewhat controversial. Makes several contacts with the 16S rRNA in the 70S ribosome. In Buchnera aphidicola subsp. Acyrthosiphon pisum (strain 5A), this protein is Large ribosomal subunit protein uL2.